A 102-amino-acid chain; its full sequence is Small ribosomal subunit protein uS10 (102 aa).

It belongs to the universal ribosomal protein uS10 family. Part of the 30S ribosomal subunit.

Its function is as follows. Involved in the binding of tRNA to the ribosomes. This Carboxydothermus hydrogenoformans (strain ATCC BAA-161 / DSM 6008 / Z-2901) protein is Small ribosomal subunit protein uS10.